Here is a 468-residue protein sequence, read N- to C-terminus: Chromosomal replication initiator protein DnaA (468 aa).

Residues 1–90 (MTQEKWGLLC…NSPMRPARAA (90 aa)) form a domain I, interacts with DnaA modulators region. Residues 91–126 (RPAAAAAAAAAAVEAPQVSAPRATDTSDVLDGLQAA) are domain II. The tract at residues 127 to 348 (PLDPRFTFDS…GALTRLFAFA (222 aa)) is domain III, AAA+ region. Gly171, Gly173, Lys174, and Thr175 together coordinate ATP. Positions 349–468 (SLVGREIDME…VEMLRRALEA (120 aa)) are domain IV, binds dsDNA.

The protein belongs to the DnaA family. As to quaternary structure, oligomerizes as a right-handed, spiral filament on DNA at oriC.

It localises to the cytoplasm. In terms of biological role, plays an essential role in the initiation and regulation of chromosomal replication. ATP-DnaA binds to the origin of replication (oriC) to initiate formation of the DNA replication initiation complex once per cell cycle. Binds the DnaA box (a 9 base pair repeat at the origin) and separates the double-stranded (ds)DNA. Forms a right-handed helical filament on oriC DNA; dsDNA binds to the exterior of the filament while single-stranded (ss)DNA is stabiized in the filament's interior. The ATP-DnaA-oriC complex binds and stabilizes one strand of the AT-rich DNA unwinding element (DUE), permitting loading of DNA polymerase. After initiation quickly degrades to an ADP-DnaA complex that is not apt for DNA replication. Binds acidic phospholipids. In Ruegeria pomeroyi (strain ATCC 700808 / DSM 15171 / DSS-3) (Silicibacter pomeroyi), this protein is Chromosomal replication initiator protein DnaA.